A 403-amino-acid polypeptide reads, in one-letter code: Homoserine O-succinyltransferase (403 aa).

The interval 1-31 (MTELQVDPAASADPAAAADTPRHPAATLPPD) is disordered. Positions 7-26 (DPAASADPAAAADTPRHPAA) are enriched in low complexity. Positions 74–383 (NAVLICHALN…HGHDAFLLED (310 aa)) constitute an AB hydrolase-1 domain. The active-site Nucleophile is the Ser178. Residue Arg248 participates in substrate binding. Catalysis depends on residues Asp343 and His376. Asp377 is a substrate binding site.

Belongs to the AB hydrolase superfamily. MetX family. As to quaternary structure, homodimer.

It is found in the cytoplasm. It carries out the reaction L-homoserine + succinyl-CoA = O-succinyl-L-homoserine + CoA. The protein operates within amino-acid biosynthesis; L-methionine biosynthesis via de novo pathway; O-succinyl-L-homoserine from L-homoserine: step 1/1. Functionally, transfers a succinyl group from succinyl-CoA to L-homoserine, forming succinyl-L-homoserine. The polypeptide is Homoserine O-succinyltransferase (Ralstonia nicotianae (strain ATCC BAA-1114 / GMI1000) (Ralstonia solanacearum)).